Consider the following 402-residue polypeptide: Hyaluronan and proteoglycan link protein 4 (402 aa).

The N-terminal stretch at 1–29 is a signal peptide; it reads MVCARAALGPGALWAAAWGVLLLTAPAGA. Positions 46–161 constitute an Ig-like C2-type domain; it reads SVVVQTAPGQ…DAGMVKLDLE (116 aa). Cystine bridges form between Cys-68-Cys-143, Cys-185-Cys-266, Cys-209-Cys-230, Cys-293-Cys-363, and Cys-318-Cys-339. Asn-132 carries N-linked (GlcNAc...) asparagine glycosylation. Link domains follow at residues 163–268 and 273–365; these read VVFP…FCFT and GRVF…YCYR.

This sequence belongs to the HAPLN family. Expressed predominantly in brain.

It localises to the secreted. The protein resides in the extracellular space. The protein localises to the extracellular matrix. Functionally, essential for the proper localization of brevican (BCAN), mainly as a perineuronal nets (PNNs)-type deposition in the brainstem and cerebellum thereby playing a key role in the formation and structural organization of PNNs. Contributes to the formation and transmission of inhibitory GABAergic synapses between Purkinje cells and deep cerebellar nuclei neurons. The polypeptide is Hyaluronan and proteoglycan link protein 4 (HAPLN4) (Homo sapiens (Human)).